The following is a 161-amino-acid chain: Cyclic pyranopterin monophosphate synthase (161 aa).

Substrate contacts are provided by residues 75–77 (MCH) and 115–116 (ME). Residue D130 is part of the active site.

Belongs to the MoaC family. As to quaternary structure, homohexamer; trimer of dimers.

The catalysed reaction is (8S)-3',8-cyclo-7,8-dihydroguanosine 5'-triphosphate = cyclic pyranopterin phosphate + diphosphate. It functions in the pathway cofactor biosynthesis; molybdopterin biosynthesis. In terms of biological role, catalyzes the conversion of (8S)-3',8-cyclo-7,8-dihydroguanosine 5'-triphosphate to cyclic pyranopterin monophosphate (cPMP). The chain is Cyclic pyranopterin monophosphate synthase from Bacillus cereus (strain ATCC 10987 / NRS 248).